Reading from the N-terminus, the 318-residue chain is Methionyl-tRNA formyltransferase (318 aa).

112-115 (SILP) is a binding site for (6S)-5,6,7,8-tetrahydrofolate.

The protein belongs to the Fmt family.

It catalyses the reaction L-methionyl-tRNA(fMet) + (6R)-10-formyltetrahydrofolate = N-formyl-L-methionyl-tRNA(fMet) + (6S)-5,6,7,8-tetrahydrofolate + H(+). Functionally, attaches a formyl group to the free amino group of methionyl-tRNA(fMet). The formyl group appears to play a dual role in the initiator identity of N-formylmethionyl-tRNA by promoting its recognition by IF2 and preventing the misappropriation of this tRNA by the elongation apparatus. This is Methionyl-tRNA formyltransferase from Shewanella putrefaciens (strain CN-32 / ATCC BAA-453).